The primary structure comprises 35 residues: Z-limacoditoxin(1)-Dv4 (35 aa).

Positions 1–22 (MKKTFLPIFLVILLASYALGNP) are cleaved as a signal peptide. Glutamine 23 carries the post-translational modification Pyrrolidone carboxylic acid. At proline 32 the chain carries Proline amide.

This sequence belongs to the limacoditoxin-1 (ACP-like) family. As to expression, expressed by the venom secretory cell of the spine. The spine is a cuticular structure containing a single large nucleated venom-secreting cell at its base. It is an independent unit capable of producing, storing and injecting venom. On the back of D.vulnerans caterpillars, spines are grouped together by 50 to 100 to form scoli, of which there are eight in D.vulnerans.

Its subcellular location is the secreted. Potently activates insect GPCR. More precisely, it activates the ACP receptor (ACPR) from the mosquito A.aegypti (EC(50)=3.07 nM) with a potency comparable to that of the endogenous ligand. Has no activity on receptors of the closely related neuropeptides adipokinetic hormone and corazonin. In vivo, does not reveal any observable effects when injected into crickets (A.domesticus). Does not induce increase in intracellular calcium in mouse DRG neurons, suggesting that it does not induce pain. This is Z-limacoditoxin(1)-Dv4 from Doratifera vulnerans (Mottled cup moth).